Reading from the N-terminus, the 300-residue chain is Tyrosine recombinase XerD (300 aa).

One can recognise a Core-binding (CB) domain in the interval 5–90; that stretch reads YQCDPLIDAF…SLRRFYNYLL (86 aa). Residues 111 to 294 form the Tyr recombinase domain; it reads HLPDSLSESQ…ARARLQELHQ (184 aa). Catalysis depends on residues arginine 151, lysine 175, histidine 246, arginine 249, and histidine 272. The active-site O-(3'-phospho-DNA)-tyrosine intermediate is the tyrosine 281.

It belongs to the 'phage' integrase family. XerD subfamily. In terms of assembly, forms a cyclic heterotetrameric complex composed of two molecules of XerC and two molecules of XerD.

The protein localises to the cytoplasm. In terms of biological role, site-specific tyrosine recombinase, which acts by catalyzing the cutting and rejoining of the recombining DNA molecules. The XerC-XerD complex is essential to convert dimers of the bacterial chromosome into monomers to permit their segregation at cell division. It also contributes to the segregational stability of plasmids. This Shewanella oneidensis (strain ATCC 700550 / JCM 31522 / CIP 106686 / LMG 19005 / NCIMB 14063 / MR-1) protein is Tyrosine recombinase XerD.